The following is a 971-amino-acid chain: Exportin-2 (971 aa).

The residue at position 1 (Met1) is an N-acetylmethionine. The Importin N-terminal domain occupies 29–102; the sequence is AEKFLESVEG…KANIVHLMLS (74 aa). Residue Ser112 is modified to Phosphoserine. 2 positions are modified to N6-acetyllysine: Lys574 and Lys824. Ser931 is modified (phosphoserine).

The protein belongs to the XPO2/CSE1 family. In terms of assembly, found in a complex with CSE1L/XPO2, Ran and KPNA2. Binds with high affinity to importin-alpha only in the presence of RanGTP. The complex is dissociated by the combined action of RanBP1 and RanGAP1. Interacts with CFTR. Detected in brain, placenta, ovary, testis and trachea (at protein level). Widely expressed. Highly expressed in testis and in proliferating cells.

It is found in the cytoplasm. It localises to the nucleus. Functionally, export receptor for importin-alpha. Mediates importin-alpha re-export from the nucleus to the cytoplasm after import substrates (cargos) have been released into the nucleoplasm. In the nucleus binds cooperatively to importin-alpha and to the GTPase Ran in its active GTP-bound form. Docking of this trimeric complex to the nuclear pore complex (NPC) is mediated through binding to nucleoporins. Upon transit of a nuclear export complex into the cytoplasm, disassembling of the complex and hydrolysis of Ran-GTP to Ran-GDP (induced by RANBP1 and RANGAP1, respectively) cause release of the importin-alpha from the export receptor. CSE1L/XPO2 then return to the nuclear compartment and mediate another round of transport. The directionality of nuclear export is thought to be conferred by an asymmetric distribution of the GTP- and GDP-bound forms of Ran between the cytoplasm and nucleus. This chain is Exportin-2 (CSE1L), found in Homo sapiens (Human).